We begin with the raw amino-acid sequence, 138 residues long: Small ribosomal subunit protein uS11c (138 aa).

The disordered stretch occupies residues 1–23 (MAKPIPRIGSRKNGRIGSRKSGR). Residues 9–23 (GSRKNGRIGSRKSGR) show a composition bias toward basic residues.

It belongs to the universal ribosomal protein uS11 family. Part of the 30S ribosomal subunit.

It is found in the plastid. The protein localises to the chloroplast. The chain is Small ribosomal subunit protein uS11c from Buxus microphylla (Littleleaf boxwood).